The chain runs to 180 residues: Acireductone dioxygenase (180 aa).

Fe(2+) contacts are provided by H99, H101, E105, and H145. Residues H99, H101, E105, and H145 each contribute to the Ni(2+) site.

This sequence belongs to the acireductone dioxygenase (ARD) family. In terms of assembly, monomer. Fe(2+) serves as cofactor. The cofactor is Ni(2+).

It catalyses the reaction 1,2-dihydroxy-5-(methylsulfanyl)pent-1-en-3-one + O2 = 3-(methylsulfanyl)propanoate + CO + formate + 2 H(+). The enzyme catalyses 1,2-dihydroxy-5-(methylsulfanyl)pent-1-en-3-one + O2 = 4-methylsulfanyl-2-oxobutanoate + formate + 2 H(+). It participates in amino-acid biosynthesis; L-methionine biosynthesis via salvage pathway; L-methionine from S-methyl-5-thio-alpha-D-ribose 1-phosphate: step 5/6. Its function is as follows. Catalyzes 2 different reactions between oxygen and the acireductone 1,2-dihydroxy-3-keto-5-methylthiopentene (DHK-MTPene) depending upon the metal bound in the active site. Fe-containing acireductone dioxygenase (Fe-ARD) produces formate and 2-keto-4-methylthiobutyrate (KMTB), the alpha-ketoacid precursor of methionine in the methionine recycle pathway. Ni-containing acireductone dioxygenase (Ni-ARD) produces methylthiopropionate, carbon monoxide and formate, and does not lie on the methionine recycle pathway. In Geobacillus kaustophilus (strain HTA426), this protein is Acireductone dioxygenase.